The primary structure comprises 385 residues: Eukaryotic translation initiation factor 3 subunit M (385 aa).

Residues 180-342 (NSELASKVMI…RKVHISSTMH (163 aa)) form the PCI domain.

It belongs to the eIF-3 subunit M family. As to quaternary structure, component of the eukaryotic translation initiation factor 3 (eIF-3) complex.

The protein resides in the cytoplasm. Component of the eukaryotic translation initiation factor 3 (eIF-3) complex, which is involved in protein synthesis of a specialized repertoire of mRNAs and, together with other initiation factors, stimulates binding of mRNA and methionyl-tRNAi to the 40S ribosome. The eIF-3 complex specifically targets and initiates translation of a subset of mRNAs involved in cell proliferation. This chain is Eukaryotic translation initiation factor 3 subunit M, found in Anopheles gambiae (African malaria mosquito).